We begin with the raw amino-acid sequence, 825 residues long: NT-3 growth factor receptor (825 aa).

Positions 1–31 are cleaved as a signal peptide; the sequence is MDVSLCPAKCSFWRIFLLGSVWLDYVGSVLA. Cystine bridges form between cysteine 32–cysteine 38 and cysteine 36–cysteine 45. Residues 32-429 are Extracellular-facing; it reads CPANCVCSKT…TVTHKPEEDT (398 aa). Residues asparagine 68, asparagine 72, and asparagine 79 are each glycosylated (N-linked (GlcNAc...) asparagine). LRR repeat units lie at residues 104-125 and 128-149; these read GLQK…AFAK and HLRY…LFQT. 2 N-linked (GlcNAc...) asparagine glycosylation sites follow: asparagine 133 and asparagine 163. The LRRCT domain maps to 160-209; the sequence is NFFNCSCDIRWMQLWQEQGEAKLNSQNLYCINTDGSQLPLFRMNISQCDL. Intrachain disulfides connect cysteine 164-cysteine 189 and cysteine 166-cysteine 207. N-linked (GlcNAc...) asparagine glycosylation is found at asparagine 203, asparagine 218, asparagine 232, asparagine 259, asparagine 267, asparagine 272, and asparagine 294. 2 Ig-like C2-type domains span residues 210–300 and 309–382; these read PEIS…VALT and SLEE…IAKN. Cysteines 231 and 284 form a disulfide. Cysteine 320 and cysteine 362 are joined by a disulfide. Residues asparagine 375 and asparagine 388 are each glycosylated (N-linked (GlcNAc...) asparagine). A helical membrane pass occupies residues 430–453; sequence FGVSIAVGLAAFACVLLVVLFVMI. Over 454–825 the chain is Cytoplasmic; it reads NKYGRRSKFG…ATPIYLDILG (372 aa). Serine 493 carries the phosphoserine modification. Position 516 is a phosphotyrosine; by autocatalysis (tyrosine 516). One can recognise a Protein kinase domain in the interval 538-825; that stretch reads IVLKRELGEG…ATPIYLDILG (288 aa). ATP is bound by residues 544-552 and lysine 572; that span reads LGEGAFGKV. Aspartate 679 acts as the Proton acceptor in catalysis. Phosphotyrosine; by autocatalysis is present on residues tyrosine 705, tyrosine 709, and tyrosine 710.

The protein belongs to the protein kinase superfamily. Tyr protein kinase family. Insulin receptor subfamily. As to quaternary structure, exists in a dynamic equilibrium between monomeric (low affinity) and dimeric (high affinity) structures. Binds SH2B2. Interacts with SQSTM1 and KIDINS220. Interacts with PTPRS. Interacts with MAPK8IP3/JIP3. Post-translationally, ligand-mediated auto-phosphorylation.

Its subcellular location is the membrane. It catalyses the reaction L-tyrosyl-[protein] + ATP = O-phospho-L-tyrosyl-[protein] + ADP + H(+). In terms of biological role, receptor tyrosine kinase involved in nervous system and probably heart development. Upon binding of its ligand NTF3/neurotrophin-3, NTRK3 autophosphorylates and activates different signaling pathways, including the phosphatidylinositol 3-kinase/AKT and the MAPK pathways, that control cell survival and differentiation. This chain is NT-3 growth factor receptor (NTRK3), found in Pan troglodytes (Chimpanzee).